A 382-amino-acid chain; its full sequence is Putative glutamate--cysteine ligase 2-1 (382 aa).

Belongs to the glutamate--cysteine ligase type 2 family. YbdK subfamily.

The catalysed reaction is L-cysteine + L-glutamate + ATP = gamma-L-glutamyl-L-cysteine + ADP + phosphate + H(+). Its function is as follows. ATP-dependent carboxylate-amine ligase which exhibits weak glutamate--cysteine ligase activity. The polypeptide is Putative glutamate--cysteine ligase 2-1 (Frankia casuarinae (strain DSM 45818 / CECT 9043 / HFP020203 / CcI3)).